A 376-amino-acid polypeptide reads, in one-letter code: Natterin-2 (376 aa).

An N-terminal signal peptide occupies residues 1–18 (MNLSVLLVTLLLLSWTSA). Positions 19-27 (EKDLKVRVA) are excised as a propeptide.

The protein belongs to the natterin family. Post-translationally, contains 4 disulfide bonds. Expressed by the venom gland.

Its subcellular location is the secreted. With respect to regulation, inhibited by tissue-kallikrein inhibitor TKI and trasylol. Plasma kallikrein inhibitor PKSI527 and classical inhibitors of serine-, metallo-, thiol- or aspartate-peptidases evokes a minor inhibition of the peptide digestion. Shows nociceptive, edema-inducing and kininogenase activity with release of kallidin from low molecular weight kininogen. The cleavage occurs at Met-Lys bonds. In Thalassophryne nattereri (Copper Joe toadfish), this protein is Natterin-2.